The primary structure comprises 381 residues: L-lactate dehydrogenase (381 aa).

In terms of domain architecture, FMN hydroxy acid dehydrogenase spans 1 to 380 (MIISSTNDYR…TRDALVDLSK (380 aa)). A substrate-binding site is contributed by Y24. FMN-binding residues include S106 and Q127. Y129 lines the substrate pocket. Residue T155 coordinates FMN. Residue R164 participates in substrate binding. Residue K251 participates in FMN binding. H275 (proton acceptor) is an active-site residue. Position 278 (R278) interacts with substrate. 306-330 (DSGIRNGLDIVRMLALGADATMLGR) is an FMN binding site.

This sequence belongs to the FMN-dependent alpha-hydroxy acid dehydrogenase family. FMN is required as a cofactor.

It is found in the cell inner membrane. The catalysed reaction is (S)-lactate + A = pyruvate + AH2. Catalyzes the conversion of L-lactate to pyruvate. Is coupled to the respiratory chain. The protein is L-lactate dehydrogenase of Actinobacillus pleuropneumoniae serotype 3 (strain JL03).